The primary structure comprises 206 residues: LexA repressor (206 aa).

The H-T-H motif DNA-binding region spans 28 to 48 (RAEIATRLGFKSANAAEEHLK). Active-site for autocatalytic cleavage activity residues include serine 123 and lysine 160.

Belongs to the peptidase S24 family. In terms of assembly, homodimer.

The catalysed reaction is Hydrolysis of Ala-|-Gly bond in repressor LexA.. In terms of biological role, represses a number of genes involved in the response to DNA damage (SOS response), including recA and lexA. In the presence of single-stranded DNA, RecA interacts with LexA causing an autocatalytic cleavage which disrupts the DNA-binding part of LexA, leading to derepression of the SOS regulon and eventually DNA repair. This is LexA repressor from Shewanella baltica (strain OS223).